Reading from the N-terminus, the 683-residue chain is Hexamerin 70b (683 aa).

The signal sequence occupies residues 1 to 21 (MIVIMKAGFLFLASLCLLVQA). The Hemocyanin N-terminal domain maps to 32–153 (VTRQKNIYEL…VAVIHRPDTK (122 aa)). The Hemocyanin middle domain occupies 159 to 428 (PMYEVMPHLY…SIYKTILDYY (270 aa)). An N-linked (GlcNAc...) asparagine glycan is attached at N203. One can recognise a Hemocyanin C-terminal domain in the interval 437–673 (KYTTEELNFP…IHVKEVLVHH (237 aa)).

The protein belongs to the hemocyanin/hexamerin family. As to quaternary structure, probable homohexamer. In terms of tissue distribution, expressed in the fat body and secreted into the hemolymph (at protein level). Present in trophocytes and oenocytes of the fat body (at protein level).

It localises to the secreted. The protein localises to the nucleus. Its subcellular location is the cytoplasm. It is found in the cytoplasmic granule. In terms of biological role, storage protein that may function as a nutrient supply to compensate for lack of dietary proteins during metamorphosis and egg production. The polypeptide is Hexamerin 70b (Apis mellifera (Honeybee)).